Reading from the N-terminus, the 88-residue chain is Large ribosomal subunit protein bL27 (88 aa).

Residues 1-24 (MAHKKGTGSTRNGRDSNSKRLGVK) form a disordered region.

It belongs to the bacterial ribosomal protein bL27 family.

This is Large ribosomal subunit protein bL27 from Prochlorococcus marinus (strain MIT 9313).